The chain runs to 178 residues: ATP-dependent protease subunit HslV (178 aa).

T7 is an active-site residue. G162, C165, and T168 together coordinate Na(+).

It belongs to the peptidase T1B family. HslV subfamily. In terms of assembly, a double ring-shaped homohexamer of HslV is capped on each side by a ring-shaped HslU homohexamer. The assembly of the HslU/HslV complex is dependent on binding of ATP.

Its subcellular location is the cytoplasm. It catalyses the reaction ATP-dependent cleavage of peptide bonds with broad specificity.. With respect to regulation, allosterically activated by HslU binding. In terms of biological role, protease subunit of a proteasome-like degradation complex believed to be a general protein degrading machinery. This chain is ATP-dependent protease subunit HslV, found in Paraburkholderia phymatum (strain DSM 17167 / CIP 108236 / LMG 21445 / STM815) (Burkholderia phymatum).